The chain runs to 162 residues: Phycoerythrocyanin alpha chain (162 aa).

Position 84 (cysteine 84) interacts with (15Z)-phycoviolobilin.

The protein belongs to the phycobiliprotein family. Heterodimer of an alpha and a beta chain. Contains one covalently linked bilin chromophore.

The protein localises to the cellular thylakoid membrane. In terms of biological role, light-harvesting photosynthetic bile pigment-protein from the phycobiliprotein complex. This is Phycoerythrocyanin alpha chain (pecA) from Nostoc sp. (strain PCC 7120 / SAG 25.82 / UTEX 2576).